A 369-amino-acid polypeptide reads, in one-letter code: Anhydro-N-acetylmuramic acid kinase (369 aa).

An ATP-binding site is contributed by glycine 12–aspartate 19.

It belongs to the anhydro-N-acetylmuramic acid kinase family.

It carries out the reaction 1,6-anhydro-N-acetyl-beta-muramate + ATP + H2O = N-acetyl-D-muramate 6-phosphate + ADP + H(+). Its pathway is amino-sugar metabolism; 1,6-anhydro-N-acetylmuramate degradation. It functions in the pathway cell wall biogenesis; peptidoglycan recycling. Catalyzes the specific phosphorylation of 1,6-anhydro-N-acetylmuramic acid (anhMurNAc) with the simultaneous cleavage of the 1,6-anhydro ring, generating MurNAc-6-P. Is required for the utilization of anhMurNAc either imported from the medium or derived from its own cell wall murein, and thus plays a role in cell wall recycling. The polypeptide is Anhydro-N-acetylmuramic acid kinase (Escherichia coli O8 (strain IAI1)).